An 88-amino-acid chain; its full sequence is Auxin-responsive protein SAUR21 (88 aa).

The protein belongs to the ARG7 family.

Its subcellular location is the cell membrane. Functionally, functions as a positive effector of cell expansion through modulation of auxin transport. This is Auxin-responsive protein SAUR21 from Arabidopsis thaliana (Mouse-ear cress).